The sequence spans 378 residues: Ubiquitin-conjugating enzyme E2 Q2 (378 aa).

Residues 126-152 (DQPLPTGQNGTTEEVTSEEEEEEEMAE) are disordered. The segment covering 140-152 (VTSEEEEEEEMAE) has biased composition (acidic residues). In terms of domain architecture, UBC core spans 207 to 371 (QASDRLMKEL…VQIHEKNGWY (165 aa)). Cys-307 functions as the Glycyl thioester intermediate in the catalytic mechanism.

It belongs to the ubiquitin-conjugating enzyme family. Auto-ubiquitinated in vitro.

The protein localises to the cytoplasm. It catalyses the reaction S-ubiquitinyl-[E1 ubiquitin-activating enzyme]-L-cysteine + [E2 ubiquitin-conjugating enzyme]-L-cysteine = [E1 ubiquitin-activating enzyme]-L-cysteine + S-ubiquitinyl-[E2 ubiquitin-conjugating enzyme]-L-cysteine.. The protein operates within protein modification; protein ubiquitination. Functionally, accepts ubiquitin from the E1 complex and catalyzes its covalent attachment to other proteins. In vitro catalyzes 'Lys-48'-linked polyubiquitination. This Mus musculus (Mouse) protein is Ubiquitin-conjugating enzyme E2 Q2 (Ube2q2).